A 292-amino-acid polypeptide reads, in one-letter code: UTP--glucose-1-phosphate uridylyltransferase (292 aa).

This sequence belongs to the UDPGP type 2 family. Interacts with FloT.

The protein resides in the cell membrane. Its subcellular location is the membrane raft. It catalyses the reaction alpha-D-glucose 1-phosphate + UTP + H(+) = UDP-alpha-D-glucose + diphosphate. It functions in the pathway glycolipid metabolism; diglucosyl-diacylglycerol biosynthesis. Its function is as follows. Catalyzes the formation of UDP-glucose from glucose-1-phosphate and UTP. This is an intermediate step in the biosynthesis of diglucosyl-diacylglycerol (Glc2-DAG), i.e. the predominant glycolipid found in B.subtilis membrane, which is also used as a membrane anchor for lipoteichoic acid (LTA). Has a role in the biosynthesis of all phosphate-containing envelope polymers, since UDP-glucose serves as a glucosyl donor not only for the biosynthesis of LTA but also for wall teichoic acids (WTAs). Is required for biofilm formation. This is likely due to another role of UDP-glucose, which might also act as a metabolic signal regulating biofilm formation or may be involved in some unknown biosynthetic pathway essential for biofilm formation, e.g. the synthesis of an exopolysaccharide. The polypeptide is UTP--glucose-1-phosphate uridylyltransferase (gtaB) (Bacillus subtilis (strain 168)).